Here is a 470-residue protein sequence, read N- to C-terminus: MNPNQKIIAIGSASLGILILNVILHVVSIIVTVLVLNNNGTGLNCNGTIIREYNETVRVERITQWYNTNTIEYIERPSNEYYMNNTEPLCEAQGFAPFSKDNGIRIGSRGHVFVIREPFVSCSPLECRTFFLTQGSLLNDKHSNGTVKDRSPYRTLMSVKVGQSPNVYQARFESVAWSATACHDGKKWMTVGVTGPDNQAVAVVNYGGVPVDIINSWGRDILRTQESSCTCIKGDCYWVMTDGPANRQAKYRIFKAKDGRIIGQTDISFNGGHIEECSCYPNEGKVECVCRDNWTGTNRPILVISPDLSYTVGYLCAGIPTDTPRGEDSQFTGSCTSPLGNKGYGVKGFGFRQGNDVWAGRTISRTSRSGFEIIKIRNGWTQNSKDQIRKQVIIDNLNWSGYSGSFTLPVELTKKGCLVPCFWVEMIRGKPEDTTIWTSSSSIVMCGVDHKIASWSWHDGAILPFDIDKI.

Residues 1-14 are Intravirion-facing; sequence MNPNQKIIAIGSAS. An involved in apical transport and lipid raft association region spans residues 11 to 32; that stretch reads GSASLGILILNVILHVVSIIVT. The helical transmembrane segment at 15 to 35 threads the bilayer; that stretch reads LGILILNVILHVVSIIVTVLV. The interval 32-86 is hypervariable stalk region; it reads TVLVLNNNGTGLNCNGTIIREYNETVRVERITQWYNTNTIEYIERPSNEYYMNNT. Over 36–470 the chain is Virion surface; the sequence is LNNNGTGLNC…AILPFDIDKI (435 aa). N-linked (GlcNAc...) asparagine; by host glycosylation is found at Asn-39, Asn-46, Asn-54, and Asn-84. The tract at residues 89–470 is head of neuraminidase; the sequence is LCEAQGFAPF…AILPFDIDKI (382 aa). Disulfide bonds link Cys-90/Cys-417, Cys-122/Cys-127, Cys-182/Cys-229, Cys-231/Cys-236, Cys-277/Cys-290, Cys-279/Cys-288, Cys-316/Cys-335, and Cys-421/Cys-446. Arg-116 lines the substrate pocket. An N-linked (GlcNAc...) asparagine; by host glycan is attached at Asn-144. Asp-149 acts as the Proton donor/acceptor in catalysis. Arg-150 is a binding site for substrate. 275-276 is a binding site for substrate; the sequence is EE. Arg-291 lines the substrate pocket. Asp-292 contributes to the Ca(2+) binding site. Asn-293 is a glycosylation site (N-linked (GlcNAc...) asparagine; by host). Residues Gly-296 and Asp-322 each coordinate Ca(2+). Position 368 (Arg-368) interacts with substrate. Residue Asn-398 is glycosylated (N-linked (GlcNAc...) asparagine; by host). Tyr-402 (nucleophile) is an active-site residue.

It belongs to the glycosyl hydrolase 34 family. As to quaternary structure, homotetramer. Requires Ca(2+) as cofactor. In terms of processing, N-glycosylated.

The protein resides in the virion membrane. Its subcellular location is the host apical cell membrane. The enzyme catalyses Hydrolysis of alpha-(2-&gt;3)-, alpha-(2-&gt;6)-, alpha-(2-&gt;8)- glycosidic linkages of terminal sialic acid residues in oligosaccharides, glycoproteins, glycolipids, colominic acid and synthetic substrates.. Inhibited by the neuraminidase inhibitors zanamivir (Relenza) and oseltamivir (Tamiflu). These drugs interfere with the release of progeny virus from infected cells and are effective against all influenza strains. Resistance to neuraminidase inhibitors is quite rare. In terms of biological role, catalyzes the removal of terminal sialic acid residues from viral and cellular glycoconjugates. Cleaves off the terminal sialic acids on the glycosylated HA during virus budding to facilitate virus release. Additionally helps virus spread through the circulation by further removing sialic acids from the cell surface. These cleavages prevent self-aggregation and ensure the efficient spread of the progeny virus from cell to cell. Otherwise, infection would be limited to one round of replication. Described as a receptor-destroying enzyme because it cleaves a terminal sialic acid from the cellular receptors. May facilitate viral invasion of the upper airways by cleaving the sialic acid moieties on the mucin of the airway epithelial cells. Likely to plays a role in the budding process through its association with lipid rafts during intracellular transport. May additionally display a raft-association independent effect on budding. Plays a role in the determination of host range restriction on replication and virulence. Sialidase activity in late endosome/lysosome traffic seems to enhance virus replication. The polypeptide is Neuraminidase (Influenza A virus (strain A/Equine/Kentucky/1/1981)).